The sequence spans 384 residues: S-adenosylmethionine synthase (384 aa).

An ATP-binding site is contributed by His15. Asp17 is a Mg(2+) binding site. A K(+)-binding site is contributed by Glu43. Glu56 and Gln99 together coordinate L-methionine. Residues Gln99–Lys109 form a flexible loop region. Residues Asp164–Lys166, Arg230–Phe231, Asp239, Arg245–Lys246, Ala262, and Lys266 each bind ATP. Residue Asp239 coordinates L-methionine. Lys270 lines the L-methionine pocket.

Belongs to the AdoMet synthase family. As to quaternary structure, homotetramer; dimer of dimers. Mg(2+) is required as a cofactor. K(+) serves as cofactor.

It is found in the cytoplasm. The catalysed reaction is L-methionine + ATP + H2O = S-adenosyl-L-methionine + phosphate + diphosphate. Its pathway is amino-acid biosynthesis; S-adenosyl-L-methionine biosynthesis; S-adenosyl-L-methionine from L-methionine: step 1/1. Its function is as follows. Catalyzes the formation of S-adenosylmethionine (AdoMet) from methionine and ATP. The overall synthetic reaction is composed of two sequential steps, AdoMet formation and the subsequent tripolyphosphate hydrolysis which occurs prior to release of AdoMet from the enzyme. The sequence is that of S-adenosylmethionine synthase from Aliivibrio fischeri (strain ATCC 700601 / ES114) (Vibrio fischeri).